A 954-amino-acid polypeptide reads, in one-letter code: Bifunctional endo-1,4-beta-xylanase XylA (954 aa).

The segment at residues Met-1 to Ala-27 is a signal peptide (or 28, or 29). Residues Ala-29–Val-236 enclose the GH11 domain. Glu-122 serves as the catalytic Nucleophile. Catalysis depends on Glu-223, which acts as the Proton donor. The span at Val-233 to Ser-243 shows a compositional bias: polar residues. A disordered region spans residues Val-233–Asp-628. The segment covering Asn-246–Asn-622 has biased composition (low complexity). The GH10 domain occupies Ala-624 to Leu-952. The active-site Proton donor is the Glu-774. The active-site Nucleophile is the Glu-884.

The protein in the N-terminal section; belongs to the glycosyl hydrolase 11 (cellulase G) family. In the C-terminal section; belongs to the glycosyl hydrolase 10 (cellulase F) family.

It catalyses the reaction Endohydrolysis of (1-&gt;4)-beta-D-xylosidic linkages in xylans.. It functions in the pathway glycan degradation; xylan degradation. Its function is as follows. Xylanase domain releases more xylo-oligosaccharides and GH10 domain more xylose. The sequence is that of Bifunctional endo-1,4-beta-xylanase XylA (xynA) from Ruminococcus flavefaciens.